The primary structure comprises 132 residues: Small ribosomal subunit protein uS8c (132 aa).

The protein belongs to the universal ribosomal protein uS8 family. As to quaternary structure, part of the 30S ribosomal subunit.

Its subcellular location is the plastid. The protein localises to the chloroplast. One of the primary rRNA binding proteins, it binds directly to 16S rRNA central domain where it helps coordinate assembly of the platform of the 30S subunit. The polypeptide is Small ribosomal subunit protein uS8c (rps8) (Staurastrum punctulatum (Green alga)).